A 344-amino-acid polypeptide reads, in one-letter code: Holliday junction branch migration complex subunit RuvB (344 aa).

A large ATPase domain (RuvB-L) region spans residues 1–180; the sequence is MSRIVSGEAQ…FGIPVRLEFY (180 aa). ATP-binding residues include Leu19, Arg20, Gly61, Lys64, Thr65, Thr66, Arg170, Tyr180, and Arg217. Mg(2+) is bound at residue Thr65. The small ATPAse domain (RuvB-S) stretch occupies residues 181 to 251; it reads THDELARVLL…AAAAALARLD (71 aa). Residues 254-344 form a head domain (RuvB-H) region; it reads EVGLDALDRR…AAPPADLFDK (91 aa). DNA-binding residues include Arg290, Arg309, and Arg314.

The protein belongs to the RuvB family. In terms of assembly, homohexamer. Forms an RuvA(8)-RuvB(12)-Holliday junction (HJ) complex. HJ DNA is sandwiched between 2 RuvA tetramers; dsDNA enters through RuvA and exits via RuvB. An RuvB hexamer assembles on each DNA strand where it exits the tetramer. Each RuvB hexamer is contacted by two RuvA subunits (via domain III) on 2 adjacent RuvB subunits; this complex drives branch migration. In the full resolvosome a probable DNA-RuvA(4)-RuvB(12)-RuvC(2) complex forms which resolves the HJ.

It is found in the cytoplasm. It catalyses the reaction ATP + H2O = ADP + phosphate + H(+). Its function is as follows. The RuvA-RuvB-RuvC complex processes Holliday junction (HJ) DNA during genetic recombination and DNA repair, while the RuvA-RuvB complex plays an important role in the rescue of blocked DNA replication forks via replication fork reversal (RFR). RuvA specifically binds to HJ cruciform DNA, conferring on it an open structure. The RuvB hexamer acts as an ATP-dependent pump, pulling dsDNA into and through the RuvAB complex. RuvB forms 2 homohexamers on either side of HJ DNA bound by 1 or 2 RuvA tetramers; 4 subunits per hexamer contact DNA at a time. Coordinated motions by a converter formed by DNA-disengaged RuvB subunits stimulates ATP hydrolysis and nucleotide exchange. Immobilization of the converter enables RuvB to convert the ATP-contained energy into a lever motion, pulling 2 nucleotides of DNA out of the RuvA tetramer per ATP hydrolyzed, thus driving DNA branch migration. The RuvB motors rotate together with the DNA substrate, which together with the progressing nucleotide cycle form the mechanistic basis for DNA recombination by continuous HJ branch migration. Branch migration allows RuvC to scan DNA until it finds its consensus sequence, where it cleaves and resolves cruciform DNA. This Phenylobacterium zucineum (strain HLK1) protein is Holliday junction branch migration complex subunit RuvB.